The primary structure comprises 674 residues: ATP-dependent DNA helicase Hel308 (674 aa).

ATP-binding positions include glutamine 27 and 44–51 (VPTAAGKT). The 167-residue stretch at 31–197 (IEQIRKGRNV…WLDASLIKSD (167 aa)) folds into the Helicase ATP-binding domain. The short motif at 142–145 (DEIH) is the DEAH box element. The region spanning 224 to 411 (SINQIIRETV…EAKVRFNTLA (188 aa)) is the Helicase C-terminal domain.

Belongs to the helicase family. Hel308 subfamily. In terms of assembly, monomer.

It catalyses the reaction Couples ATP hydrolysis with the unwinding of duplex DNA by translocating in the 3'-5' direction.. The enzyme catalyses ATP + H2O = ADP + phosphate + H(+). In terms of biological role, DNA-dependent ATPase and 3'-5' DNA helicase that may be involved in repair of stalled replication forks. The sequence is that of ATP-dependent DNA helicase Hel308 from Thermoplasma acidophilum (strain ATCC 25905 / DSM 1728 / JCM 9062 / NBRC 15155 / AMRC-C165).